The following is a 168-amino-acid chain: tRNA-splicing endonuclease subunit Sen15 (168 aa).

Positions 1–32 are disordered; that stretch reads MEERSDSEPTPGCSGPGPAPVRDGGGAHTWAP. Phosphoserine occurs at positions 7 and 165.

This sequence belongs to the SEN15 family. As to quaternary structure, homodimer. tRNA splicing endonuclease is a heterotetramer composed of TSEN2, TSEN15, TSEN34/LENG5 and TSEN54. tRNA splicing endonuclease complex also contains proteins of the pre-mRNA 3' end processing machinery such as CLP1, CPSF1, CPSF4 and CSTF2.

Its subcellular location is the nucleus. It localises to the nucleolus. Functionally, non-catalytic subunit of the tRNA-splicing endonuclease complex, a complex responsible for identification and cleavage of the splice sites in pre-tRNA. It cleaves pre-tRNA at the 5' and 3' splice sites to release the intron. The products are an intron and two tRNA half-molecules bearing 2',3' cyclic phosphate and 5'-OH termini. There are no conserved sequences at the splice sites, but the intron is invariably located at the same site in the gene, placing the splice sites an invariant distance from the constant structural features of the tRNA body. The tRNA splicing endonuclease is also involved in mRNA processing via its association with pre-mRNA 3'-end processing factors, establishing a link between pre-tRNA splicing and pre-mRNA 3'-end formation, suggesting that the endonuclease subunits function in multiple RNA-processing events. The sequence is that of tRNA-splicing endonuclease subunit Sen15 (Tsen15) from Mus musculus (Mouse).